A 232-amino-acid chain; its full sequence is Ureidoacrylate amidohydrolase RutB (232 aa).

D26 (proton acceptor) is an active-site residue. Residue K135 is part of the active site. C168 acts as the Nucleophile in catalysis.

The protein belongs to the isochorismatase family. RutB subfamily.

The enzyme catalyses (Z)-3-ureidoacrylate + H2O + H(+) = (Z)-3-aminoacrylate + NH4(+) + CO2. It carries out the reaction (Z)-3-ureidoacrylate + H2O = (Z)-3-aminoacrylate + carbamate + H(+). The catalysed reaction is (Z)-2-methylureidoacrylate + H2O + H(+) = (Z)-2-methylaminoacrylate + NH4(+) + CO2. In terms of biological role, hydrolyzes ureidoacrylate to form aminoacrylate and carbamate. The carbamate hydrolyzes spontaneously, thereby releasing one of the nitrogen atoms of the pyrimidine ring as ammonia and one of its carbon atoms as CO2. The chain is Ureidoacrylate amidohydrolase RutB from Cronobacter turicensis (strain DSM 18703 / CCUG 55852 / LMG 23827 / z3032).